The chain runs to 350 residues: Biotin synthase (350 aa).

The Radical SAM core domain maps to 38–256; it reads NHVQVSTLLS…IAVARIMMPE (219 aa). The [4Fe-4S] cluster site is built by cysteine 53, cysteine 57, and cysteine 60. Residues cysteine 97, cysteine 128, cysteine 188, and arginine 260 each contribute to the [2Fe-2S] cluster site.

Belongs to the radical SAM superfamily. Biotin synthase family. As to quaternary structure, homodimer. The cofactor is [4Fe-4S] cluster. Requires [2Fe-2S] cluster as cofactor.

The catalysed reaction is (4R,5S)-dethiobiotin + (sulfur carrier)-SH + 2 reduced [2Fe-2S]-[ferredoxin] + 2 S-adenosyl-L-methionine = (sulfur carrier)-H + biotin + 2 5'-deoxyadenosine + 2 L-methionine + 2 oxidized [2Fe-2S]-[ferredoxin]. Its pathway is cofactor biosynthesis; biotin biosynthesis; biotin from 7,8-diaminononanoate: step 2/2. Functionally, catalyzes the conversion of dethiobiotin (DTB) to biotin by the insertion of a sulfur atom into dethiobiotin via a radical-based mechanism. This chain is Biotin synthase, found in Aliivibrio fischeri (strain ATCC 700601 / ES114) (Vibrio fischeri).